Reading from the N-terminus, the 578-residue chain is ATP-dependent RNA helicase has-1 (578 aa).

Residues Met1–Thr91 are disordered. The span at Asp13–Lys26 shows a compositional bias: basic and acidic residues. Positions Lys27–Lys36 are enriched in basic residues. Acidic residues-rich tracts occupy residues Glu43–Asn54 and Glu77–Asp88. Residues Thr107–Arg135 carry the Q motif motif. One can recognise a Helicase ATP-binding domain in the interval Ile138–Tyr313. An ATP-binding site is contributed by Ala151–Thr158. A DEAD box motif is present at residues Asp260–Asp263. The short motif at Lys339 to Lys355 is the Bipartite nuclear localization signal element. Residues Leu343–Ile497 enclose the Helicase C-terminal domain. Positions Ser556 to His578 are disordered.

It belongs to the DEAD box helicase family. DDX18/HAS1 subfamily. As to quaternary structure, associates in the nucleolus with the 60S and pre-60S ribosomal subunits.

Its subcellular location is the nucleus. The protein localises to the nucleolus. It carries out the reaction ATP + H2O = ADP + phosphate + H(+). In terms of biological role, ATP-dependent RNA helicase involved in 40S ribosomal subunit biogenesis. Required for the processing and cleavage of 35S pre-rRNA at sites A0, A1, and A2, leading to mature 18S rRNA. This Neurospora crassa (strain ATCC 24698 / 74-OR23-1A / CBS 708.71 / DSM 1257 / FGSC 987) protein is ATP-dependent RNA helicase has-1 (has-1).